The following is a 357-amino-acid chain: Histidine biosynthesis bifunctional protein HisB (357 aa).

The interval 1–167 (MNDKILFIDR…IHKYLMQNSH (167 aa)) is histidinol-phosphatase. Asp9 serves as the catalytic Nucleophile. The Mg(2+) site is built by Asp9 and Asp11. Asp11 acts as the Proton donor in catalysis. Cys93, His95, Cys101, and Cys103 together coordinate Zn(2+). Position 130 (Asp130) interacts with Mg(2+). The interval 168–357 (RVAHIQRITN…QIPSSKGILL (190 aa)) is imidazoleglycerol-phosphate dehydratase.

The protein in the N-terminal section; belongs to the histidinol-phosphatase family. It in the C-terminal section; belongs to the imidazoleglycerol-phosphate dehydratase family. Requires Mg(2+) as cofactor. The cofactor is Zn(2+).

The protein localises to the cytoplasm. The enzyme catalyses D-erythro-1-(imidazol-4-yl)glycerol 3-phosphate = 3-(imidazol-4-yl)-2-oxopropyl phosphate + H2O. It catalyses the reaction L-histidinol phosphate + H2O = L-histidinol + phosphate. It functions in the pathway amino-acid biosynthesis; L-histidine biosynthesis; L-histidine from 5-phospho-alpha-D-ribose 1-diphosphate: step 6/9. It participates in amino-acid biosynthesis; L-histidine biosynthesis; L-histidine from 5-phospho-alpha-D-ribose 1-diphosphate: step 8/9. The polypeptide is Histidine biosynthesis bifunctional protein HisB (Blochmanniella floridana).